The primary structure comprises 366 residues: Flagellar P-ring protein (366 aa).

Residues 1-27 (MKSKYSIFCMFLLRGFIFLGTVFSLNS) form the signal peptide.

This sequence belongs to the FlgI family. The basal body constitutes a major portion of the flagellar organelle and consists of four rings (L,P,S, and M) mounted on a central rod.

It is found in the periplasm. Its subcellular location is the bacterial flagellum basal body. In terms of biological role, assembles around the rod to form the L-ring and probably protects the motor/basal body from shearing forces during rotation. The polypeptide is Flagellar P-ring protein (Leptospira interrogans serogroup Icterohaemorrhagiae serovar copenhageni (strain Fiocruz L1-130)).